Reading from the N-terminus, the 149-residue chain is UPF0260 protein PSEEN4031 (149 aa).

Belongs to the UPF0260 family.

This is UPF0260 protein PSEEN4031 from Pseudomonas entomophila (strain L48).